The sequence spans 323 residues: Ethanolamine-phosphate cytidylyltransferase (323 aa).

Belongs to the cytidylyltransferase family.

The protein localises to the cytoplasm. It localises to the nucleus. It catalyses the reaction phosphoethanolamine + CTP + H(+) = CDP-ethanolamine + diphosphate. The protein operates within phospholipid metabolism; phosphatidylethanolamine biosynthesis; phosphatidylethanolamine from ethanolamine: step 2/3. Ethanolamine-phosphate cytidylyltransferase which catalyzes the second step of phosphatidylethanolamine biosynthesis. Involved in the maintenance of plasma membrane and required for proper sporulation. In Saccharomyces cerevisiae (strain ATCC 204508 / S288c) (Baker's yeast), this protein is Ethanolamine-phosphate cytidylyltransferase.